A 310-amino-acid polypeptide reads, in one-letter code: tRNA pseudouridine synthase B (310 aa).

The Nucleophile role is filled by D49.

This sequence belongs to the pseudouridine synthase TruB family. Type 1 subfamily.

It carries out the reaction uridine(55) in tRNA = pseudouridine(55) in tRNA. In terms of biological role, responsible for synthesis of pseudouridine from uracil-55 in the psi GC loop of transfer RNAs. The chain is tRNA pseudouridine synthase B from Rhizobium etli (strain ATCC 51251 / DSM 11541 / JCM 21823 / NBRC 15573 / CFN 42).